The chain runs to 758 residues: Solute carrier family 26 member 6 (758 aa).

The Cytoplasmic portion of the chain corresponds to 1-117 (MGLPDGSDQG…PQGLAYALLA (117 aa)). The helical transmembrane segment at 118–138 (GLPPMFGLYSSFYPVFIYFLF) threads the bilayer. At 139–187 (GTSRHISVGTFAVMSVMVGSVTESLTADKAFVQGLNATADDARVQVAYT) the chain is on the extracellular side. An N-linked (GlcNAc) asparagine glycan is attached at Asn-174. The chain crosses the membrane as a helical span at residues 188–208 (LSFLVGLFQVGLGLVHFGFVV). Topologically, residues 209–263 (TYLSEPLVRSYTTAASVQVLVSQLKYVFGIKLSSHSGPLSVIYTVLEVCAQLPET) are cytoplasmic. The helical transmembrane segment at 264–284 (VPGTVVTAIVAGVALVLVKLL) threads the bilayer. The Extracellular portion of the chain corresponds to 285–292 (NEKLHRRL). A helical membrane pass occupies residues 293–313 (PLPIPGELLTLIGATGISYGV). The Cytoplasmic portion of the chain corresponds to 314-340 (KLNDRFKVDVVGNITTGLIPPVAPKTE). Residues 341 to 361 (LFATLVGNAFAIAVVGFAIAI) traverse the membrane as a helical segment. Over 362–380 (SLGKIFALRHGYRVDSNQE) the chain is Extracellular. Residues 381 to 401 (LVALGLSNLIGGFFQCFPVSC) traverse the membrane as a helical segment. Residues 402 to 417 (SMSRSLVQESTGGNTQ) are Cytoplasmic-facing. The helical transmembrane segment at 418 to 438 (VAGAVSSLFILLIIVKLGELF) threads the bilayer. The Extracellular segment spans residues 439-485 (RDLPKAVLAAVIIVNLKGMMKQFSDICSLWKANRVDLLIWLVTFVAT). A helical transmembrane segment spans residues 486-506 (ILLNLDIGLAVSIVFSLLLVV). At 507–758 (VRMQLPHYSV…PKSPVLATKL (252 aa)) the chain is on the cytoplasmic side. Residues 531-741 (EYSGAKEVPG…ASVHDAVTFA (211 aa)) enclose the STAS domain. The tract at residues 585–608 (EMKLKRMKKAKKSQKQDASSKISS) is disordered. Ser-751 carries the post-translational modification Phosphoserine.

Interacts (via C-terminal domain) with PDZK1 (via C-terminal PDZ domain); the interaction induces chloride and oxalate exchange transport. Interacts with CFTR, SLC26A3 and NHERF1. Interacts with AHCYL1; the interaction increases SLC26A6 activity. Post-translationally, N-glycosylated. Glycosylation at Asn-174 positively regulates its chloride oxalate exchanger activity. In terms of tissue distribution, expressed in kidney (at protein level). Expressed in spermatogenic cells. Expressed in intestine, kidney, testis, brain, muscle, heart, and stomach. Expressed in the submandibular and sublingual salivary glands. As to expression, highly expressed in stomach, kidney, heart and small intestine, low in the lung, liver, testis, brain, skeletal muscle and colon. Expressed in the heart.

It localises to the cell membrane. It is found in the apical cell membrane. The protein resides in the cytoplasmic vesicle membrane. The protein localises to the microsome. It catalyses the reaction 2 hydrogencarbonate(in) + chloride(out) = 2 hydrogencarbonate(out) + chloride(in). It carries out the reaction oxalate(in) + chloride(out) = oxalate(out) + chloride(in). The enzyme catalyses oxalate(in) + formate(out) = oxalate(out) + formate(in). The catalysed reaction is oxalate(in) + sulfate(out) = oxalate(out) + sulfate(in). It catalyses the reaction formate(in) + chloride(out) = formate(out) + chloride(in). It carries out the reaction sulfate(in) = sulfate(out). Apical membrane chloride-bicarbonate exchange activity of the pancreatic duct is inhibited by 4,4'-diisothiocyanatostilbene-2,2'-disulfonic acid (DIDS). Oxalate secretion in the duodenum and chloride-formate exchange activity is inhibited by DIDS. With respect to regulation, chloride-formate exchange activity and transcellular sulfate absorption is inhibited by 4,4'-diisothiocyanatostilbene-2,2'-disulfonic acid (DIDS). Apical membrane anion-exchanger with wide epithelial distribution that plays a role as a component of the pH buffering system for maintaining acid-base homeostasis. Acts as a versatile DIDS-sensitive inorganic and organic anion transporter that mediates the uptake of monovalent anions like chloride, bicarbonate, formate and hydroxyl ion and divalent anions like sulfate and oxalate. Functions in multiple exchange modes involving pairs of these anions, which include chloride-bicarbonate, chloride-oxalate, oxalate-formate, oxalate-sulfate and chloride-formate exchange. Apical membrane chloride-bicarbonate exchanger that mediates luminal chloride absorption and bicarbonate secretion by the small intestinal brush border membrane and contributes to intracellular pH regulation in the duodenal upper villous epithelium during proton-coupled peptide absorption, possibly by providing a bicarbonate import pathway. Its association with carbonic anhydrase CA2 forms a bicarbonate transport metabolon; hence maximizes the local concentration of bicarbonate at the transporter site. Also mediates intestinal chloride absorption and oxalate secretion, thereby preventing hyperoxaluria and calcium oxalate urolithiasis. Transepithelial oxalate secretion, chloride-formate, chloride-oxalate and chloride-bicarbonate transport activities in the duodenum are inhibited by PKC activation in a calcium-independent manner. The apical membrane chloride-bicarbonate exchanger also provides a major route for fluid and bicarbonate secretion into the proximal tubules of the kidney as well as into the proximal part of the interlobular pancreatic ductal tree, where it mediates electrogenic chloride-bicarbonate exchange with a chloride-bicarbonate stoichiometry of 1:2, and hence will dilute and alkalinize protein-rich acinar secretion. Also mediates the transcellular sulfate absorption and oxalate secretion across the apical membrane in the duodenum and the formate ion efflux at the apical brush border of cells in the proximal tubules of kidney. Plays a role in sperm capacitation by increasing intracellular pH. In terms of biological role, mediates electrogenic chloride-bicarbonate exchange with a chloride-bicarbonate stoichiometry of 1:2. Also mediates exchange of chloride-formate and chloride-oxalate ions. Mediates transcellular sulfate absorption. The polypeptide is Solute carrier family 26 member 6 (Mus musculus (Mouse)).